A 477-amino-acid polypeptide reads, in one-letter code: ATP synthase subunit beta (477 aa).

163 to 170 (GGAGVGKT) contributes to the ATP binding site.

This sequence belongs to the ATPase alpha/beta chains family. As to quaternary structure, F-type ATPases have 2 components, CF(1) - the catalytic core - and CF(0) - the membrane proton channel. CF(1) has five subunits: alpha(3), beta(3), gamma(1), delta(1), epsilon(1). CF(0) has four main subunits: a(1), b(1), b'(1) and c(9-12).

The protein resides in the cellular thylakoid membrane. It catalyses the reaction ATP + H2O + 4 H(+)(in) = ADP + phosphate + 5 H(+)(out). Its function is as follows. Produces ATP from ADP in the presence of a proton gradient across the membrane. The catalytic sites are hosted primarily by the beta subunits. This is ATP synthase subunit beta from Synechococcus sp. (strain JA-3-3Ab) (Cyanobacteria bacterium Yellowstone A-Prime).